The sequence spans 131 residues: Putative gene 51 protein (131 aa).

The polypeptide is Putative gene 51 protein (51) (Bacillus phage SP01 (Bacteriophage SP01)).